The following is a 237-amino-acid chain: Sugar fermentation stimulation protein homolog (237 aa).

It belongs to the SfsA family.

In Pseudomonas syringae pv. syringae (strain B728a), this protein is Sugar fermentation stimulation protein homolog.